The primary structure comprises 157 residues: Large ribosomal subunit protein bL17 (157 aa).

The disordered stretch occupies residues 124 to 157 (AAPVVSKQDRAKRVKGSKKAESRSQENEGGDAAE).

This sequence belongs to the bacterial ribosomal protein bL17 family. In terms of assembly, part of the 50S ribosomal subunit. Contacts protein L32.

This Chlorobaculum tepidum (strain ATCC 49652 / DSM 12025 / NBRC 103806 / TLS) (Chlorobium tepidum) protein is Large ribosomal subunit protein bL17.